Consider the following 449-residue polypeptide: Sensor histidine protein kinase/phosphatase WalK (449 aa).

Residues 1–13 are Extracellular-facing; the sequence is MLDLLKQTIFTRD. The chain crosses the membrane as a helical span at residues 14–34; sequence FIFILILLGFILVVTLLLLEN. Residues 35–87 enclose the HAMP domain; sequence RRDNIQLKQINQKVKDLIAGDYSKVLDMQGGSEITNITNNLNDLSEVIRLTQE. The Cytoplasmic portion of the chain corresponds to 35-449; sequence RRDNIQLKQI…EEVWEDEVED (415 aa). Positions 92–158 constitute a PAS domain; the sequence is ESKRLNSILF…YELRDLITQS (67 aa). One can recognise a PAC domain in the interval 157-211; it reads QSPELLLDSQDINGEYLNLRVRFALIRRESGFISGLVAVLHDTTEQEKEERERRL. Residues 215 to 435 enclose the Histidine kinase domain; the sequence is NVSHELRTPL…TFTIVLPYDK (221 aa). At H218 the chain carries Phosphohistidine.

In terms of assembly, may form homodimers. May interact with serine/threonine-protein kinase StkP; the interaction may play a role in regulating Walk signal transduction. Autophosphorylated.

The protein resides in the membrane. It catalyses the reaction ATP + protein L-histidine = ADP + protein N-phospho-L-histidine.. Member of the two-component regulatory system WalK/WalR that regulates genes involved in cell wall metabolism. Functions as a sensor protein kinase which is autophosphorylated at a histidine residue and transfers its phosphate group to WalR. In turn, WalR binds to the upstream promoter regions of target genes to positively and negatively regulate their expression. Required to maintain expression of WalRK regulon genes in exponentially growing cells, including peptidoglycan hydrolase pcsB. Phosphorylates WalR and also capable of dephosphorylation of WalR. WalK phosphatase activity is probably involved in preventing cross-talk from PnpS and other non-cognate sensor kinases during exponential growth. May be considered a potential virulence factor. The polypeptide is Sensor histidine protein kinase/phosphatase WalK (Streptococcus pneumoniae serotype 2 (strain D39 / NCTC 7466)).